We begin with the raw amino-acid sequence, 201 residues long: Molybdenum cofactor guanylyltransferase (201 aa).

GTP contacts are provided by residues 14 to 16, lysine 31, and aspartate 104; that span reads LAG. Aspartate 104 provides a ligand contact to Mg(2+).

It belongs to the MobA family. In terms of assembly, monomer. Requires Mg(2+) as cofactor.

It is found in the cytoplasm. It catalyses the reaction Mo-molybdopterin + GTP + H(+) = Mo-molybdopterin guanine dinucleotide + diphosphate. Functionally, transfers a GMP moiety from GTP to Mo-molybdopterin (Mo-MPT) cofactor (Moco or molybdenum cofactor) to form Mo-molybdopterin guanine dinucleotide (Mo-MGD) cofactor. The chain is Molybdenum cofactor guanylyltransferase from Helicobacter pylori (strain G27).